The sequence spans 205 residues: SREBP regulating gene protein (205 aa).

The Cytoplasmic segment spans residues 1 to 16 (MVNLAAMVWRRLLRKR). The helical transmembrane segment at 17–35 (WVLALVFGLSLVYFLTSTF) threads the bilayer. Over 36–205 (KQEERAVRDR…GESPPELFPA (170 aa)) the chain is Lumenal. The N-linked (GlcNAc...) asparagine glycan is linked to N67.

The protein belongs to the SPRING family. In terms of assembly, interacts with SCAP.

It localises to the golgi apparatus membrane. Positively regulates hepatic SREBP signaling pathway by modulating the proper localization of SCAP (SREBP cleavage-activating protein) to the endoplasmic reticulum, thereby controlling the level of functional SCAP. This is SREBP regulating gene protein from Bos taurus (Bovine).